The following is a 461-amino-acid chain: Probable Xaa-Pro aminopeptidase PEPP (461 aa).

Mn(2+) contacts are provided by Asp-257, Asp-268, Glu-391, and Glu-431.

Belongs to the peptidase M24B family. Mn(2+) is required as a cofactor.

The catalysed reaction is Release of any N-terminal amino acid, including proline, that is linked to proline, even from a dipeptide or tripeptide.. Functionally, catalyzes the removal of a penultimate prolyl residue from the N-termini of peptides. The polypeptide is Probable Xaa-Pro aminopeptidase PEPP (PEPP) (Colletotrichum graminicola (strain M1.001 / M2 / FGSC 10212) (Maize anthracnose fungus)).